The following is a 422-amino-acid chain: Protein phosphatase methylesterase 1 (422 aa).

A disordered region spans residues Met1 to Ser27. Residues Ser207, Asp234, and His371 contribute to the active site.

This sequence belongs to the AB hydrolase superfamily.

The catalysed reaction is [phosphatase 2A protein]-C-terminal L-leucine methyl ester + H2O = [phosphatase 2A protein]-C-terminal L-leucine + methanol + H(+). Functionally, demethylates proteins that have been reversibly carboxymethylated. Demethylates the phosphatase PP2A catalytic subunit. The sequence is that of Protein phosphatase methylesterase 1 (PPE1) from Cryptococcus neoformans var. neoformans serotype D (strain JEC21 / ATCC MYA-565) (Filobasidiella neoformans).